We begin with the raw amino-acid sequence, 323 residues long: AA9 family lytic polysaccharide monooxygenase A (323 aa).

The N-terminal stretch at 1 to 19 is a signal peptide; the sequence is MKSFISLLGLSFLTCHASA. Positions 20 and 90 each coordinate Cu(2+). A disulfide bridge connects residues Cys59 and Cys175. His161 and Gln170 together coordinate O2. Tyr172 contributes to the Cu(2+) binding site. The N-linked (GlcNAc...) asparagine glycan is linked to Asn215. Positions 287-323 constitute a CBM1 domain; the sequence is AVVQKFGQCGGQGWTGGTTCVAGSTCTATNAYYSQCL.

This sequence belongs to the polysaccharide monooxygenase AA9 family. It depends on Cu(2+) as a cofactor.

Its subcellular location is the secreted. It catalyses the reaction [(1-&gt;4)-beta-D-glucosyl]n+m + reduced acceptor + O2 = 4-dehydro-beta-D-glucosyl-[(1-&gt;4)-beta-D-glucosyl]n-1 + [(1-&gt;4)-beta-D-glucosyl]m + acceptor + H2O.. Its function is as follows. Lytic polysaccharide monooxygenase (LPMO) that depolymerizes crystalline and amorphous polysaccharides via the oxidation of scissile alpha- or beta-(1-4)-glycosidic bonds, yielding C1 and C4 oxidation products. Catalysis by LPMOs requires the reduction of the active-site copper from Cu(II) to Cu(I) by a reducing agent and H(2)O(2) or O(2) as a cosubstrate. In Botryotinia fuckeliana (strain B05.10) (Noble rot fungus), this protein is AA9 family lytic polysaccharide monooxygenase A.